The following is a 1405-amino-acid chain: DNA-directed RNA polymerase subunit beta' (1405 aa).

4 residues coordinate Zn(2+): C70, C72, C85, and C88. The Mg(2+) site is built by D460, D462, and D464. Residues C814, C888, C895, and C898 each coordinate Zn(2+).

Belongs to the RNA polymerase beta' chain family. The RNAP catalytic core consists of 2 alpha, 1 beta, 1 beta' and 1 omega subunit. When a sigma factor is associated with the core the holoenzyme is formed, which can initiate transcription. Mg(2+) serves as cofactor. Requires Zn(2+) as cofactor.

The catalysed reaction is RNA(n) + a ribonucleoside 5'-triphosphate = RNA(n+1) + diphosphate. DNA-dependent RNA polymerase catalyzes the transcription of DNA into RNA using the four ribonucleoside triphosphates as substrates. This Shewanella oneidensis (strain ATCC 700550 / JCM 31522 / CIP 106686 / LMG 19005 / NCIMB 14063 / MR-1) protein is DNA-directed RNA polymerase subunit beta'.